The sequence spans 685 residues: Stromal interaction molecule 1 (685 aa).

An N-terminal signal peptide occupies residues Met-1–Ser-22. The Extracellular portion of the chain corresponds to Leu-23–Asp-213. The segment at Ser-24–Ser-43 is disordered. Residues Thr-32 to Glu-41 show a composition bias toward low complexity. 2 EF-hand domains span residues Ser-64 to Asn-97 and Thr-102 to Ser-126. The Ca(2+) site is built by Asp-76, Asp-78, Asn-80, Asp-82, and Glu-87. 2 N-linked (GlcNAc...) asparagine glycosylation sites follow: Asn-131 and Asn-171. The SAM domain maps to Trp-132–Phe-200. A helical transmembrane segment spans residues Phe-214–Asn-234. Topologically, residues Arg-235–Lys-685 are cytoplasmic. Positions Leu-248–Val-442 form a coiled coil. Ser-257 carries the phosphoserine modification. The segment at Pro-344–Val-442 is SOAR/CAD. The segment at Asp-475 to Glu-483 is contributes to fast Ca(2+)-dependent inactivation of CRAC channels. A compositionally biased stretch (low complexity) spans Met-490–Val-499. Residues Met-490–Gly-541 are disordered. Thr-504 carries the post-translational modification Phosphothreonine. Ser-512 is subject to Phosphoserine. Basic and acidic residues predominate over residues Asp-515–Arg-532. Thr-517 bears the Phosphothreonine mark. Phosphoserine is present on residues Ser-519, Ser-521, Ser-523, Ser-524, Ser-567, Ser-575, Ser-602, Ser-608, Ser-618, Ser-621, and Ser-628. The tract at residues Leu-596–Lys-685 is disordered. Residues Ser-608–Ser-620 show a composition bias toward low complexity. A Microtubule tip localization signal motif is present at residues Thr-642 to Pro-645. Residues Glu-655 to Asp-666 show a composition bias toward acidic residues. Position 660 is a phosphoserine (Ser-660). The residue at position 665 (Thr-665) is a Phosphothreonine. Ser-668 bears the Phosphoserine mark. Basic residues predominate over residues Gly-670–Lys-685. The segment at Lys-672–Lys-685 is required for generation of inwardly rectifying CRAC currents.

In terms of assembly, monomer in the presence of Ca(2+). It oligomerizes in absence of Ca(2+). Forms homooligomers and heterooligomers with STIM2. Interacts with pore-forming subunits of CRAC channels, ORAI1, ORAI2 and ORAI3; this interaction is potentiated upon Ca(2+) store depletion. Interacts (via the transmembrane region and the SOAR/CAD domain) with SPPL3; the interaction promotes the binding of STIM1 to ORAI1. Interacts with ORAI1. Interacts with MAPRE1; probably required for targeting to the growing microtubule plus ends. Interacts with CRACR2A/EFCAB4B; the interaction is direct and takes place in absence of Ca(2+). Forms a complex with CRACR2A/EFCAB4B and ORAI1 at low concentration of Ca(2+), the complex dissociates at elevated Ca(2+) concentrations. Interacts with SARAF, promoting a slow inactivation of STIM1-dependent SOCE activity, possibly by facilitating the deoligomerization of STIM1. Interacts with EFHB; the interaction takes place upon Ca(2+)-store depletion and inhibits the association with SARAF. Interacts with ASPH. Interacts with SLC35G1; intracellular Ca(2+)-dependent. May interact with ATP1A1, ATP2A2, ATP2B1, ATP2B4, KPNB1 and XPO1; through SLC35G1. Interacts with STIMATE, promoting STIM1 conformational switch. Interacts with TMEM178A. Interacts with CASQ1 (via C-terminal end and preferentially with the monomeric form); this interaction increases in response to a depletion of intracellular Ca(2+), decreases both STIM1 aggregation and clustering, interaction of STIM1 with ORAI1 and store-operated Ca(2+) entry (SOCE) activity. Interacts with ADCY8. Interacts with TMEM203. In terms of processing, glycosylation is required for cell surface expression. Post-translationally, phosphorylated predominantly on Ser residues. In terms of tissue distribution, expressed in maturation-stage ameloblasts (at protein level). Expressed in all tissues examined and in many cell types, including bone marrow stroma, fibroblast, B-cell precursors, lymphoma and erythroleukemia.

Its subcellular location is the cell membrane. It is found in the endoplasmic reticulum membrane. The protein localises to the sarcoplasmic reticulum. The protein resides in the cytoplasm. It localises to the cytoskeleton. In terms of biological role, acts as a Ca(2+) sensor that gates two major inward rectifying Ca(2+) channels at the plasma membrane: Ca(2+) release-activated Ca(2+) (CRAC) channels and arachidonate-regulated Ca(2+)-selective (ARC) channels. Plays a role in mediating store-operated Ca(2+) entry (SOCE), a Ca(2+) influx following depletion of intracellular Ca(2+) stores. Upon Ca(2+) depletion, translocates from the endoplasmic reticulum to the plasma membrane where it activates CRAC channel pore-forming subunits ORA1, ORA2 and ORAI3 to generate sustained and oscillatory Ca(2+) entry. Involved in enamel formation. This chain is Stromal interaction molecule 1 (Stim1), found in Mus musculus (Mouse).